Reading from the N-terminus, the 298-residue chain is Protoheme IX farnesyltransferase (298 aa).

9 helical membrane passes run 16-36 (VVALIVFTALVGMFLAIPDMP), 45-65 (ALGFLGIWLAASAAAAINQLL), 93-113 (VFAGALIVISMTILVVWVNVI), 114-134 (TAVLTFASLIGYAVIYTVYLK), 141-161 (IVIGGLAGATPPMLGWAAVTG), 172-192 (SLLVLIIFIWTPPHFWALAIF), 223-243 (VLLAIVTLAPVAVGMSGVFYL), 244-264 (GGAIVLNAVFLWYAWRMLNPP), and 277-297 (IVYLMALFAFLMVDHLLLPWV).

The protein belongs to the UbiA prenyltransferase family. Protoheme IX farnesyltransferase subfamily.

It localises to the cell inner membrane. The enzyme catalyses heme b + (2E,6E)-farnesyl diphosphate + H2O = Fe(II)-heme o + diphosphate. Its pathway is porphyrin-containing compound metabolism; heme O biosynthesis; heme O from protoheme: step 1/1. Converts heme B (protoheme IX) to heme O by substitution of the vinyl group on carbon 2 of heme B porphyrin ring with a hydroxyethyl farnesyl side group. The protein is Protoheme IX farnesyltransferase of Xanthomonas euvesicatoria pv. vesicatoria (strain 85-10) (Xanthomonas campestris pv. vesicatoria).